A 382-amino-acid polypeptide reads, in one-letter code: Lipid-A-disaccharide synthase (382 aa).

The protein belongs to the LpxB family.

The catalysed reaction is 2-N,3-O-bis[(3R)-3-hydroxytetradecanoyl]-alpha-D-glucosaminyl 1-phosphate + UDP-2-N,3-O-bis[(3R)-3-hydroxytetradecanoyl]-alpha-D-glucosamine = lipid A disaccharide (E. coli) + UDP + H(+). It carries out the reaction a lipid X + a UDP-2-N,3-O-bis[(3R)-3-hydroxyacyl]-alpha-D-glucosamine = a lipid A disaccharide + UDP + H(+). It functions in the pathway glycolipid biosynthesis; lipid IV(A) biosynthesis; lipid IV(A) from (3R)-3-hydroxytetradecanoyl-[acyl-carrier-protein] and UDP-N-acetyl-alpha-D-glucosamine: step 5/6. In terms of biological role, condensation of UDP-2,3-diacylglucosamine and 2,3-diacylglucosamine-1-phosphate to form lipid A disaccharide, a precursor of lipid A, a phosphorylated glycolipid that anchors the lipopolysaccharide to the outer membrane of the cell. The sequence is that of Lipid-A-disaccharide synthase from Salmonella arizonae (strain ATCC BAA-731 / CDC346-86 / RSK2980).